A 330-amino-acid chain; its full sequence is MNFIDEVKICIKGGNGGNGCVSFHREKFIDRGGPDGGDGGRGGSVIFRSNHHLNTLVNYRYKQHFTAENGENGKGSNRSGKSGKSLALDVPIGTQIFSEDGNILLHDFTEDDQSFEIIKGGSGGLGNSHFKTSVNQAPRKRTEGEIAEEMWIHLSLKLLSDVGLVGLPNAGKSTFLSVVTAAKPKIADYPFTTLVPNLGVVYVDDEEFVIADIPGLIEGAHQGHGLGDKFLKHIERCNVLIHLIDGSSNDVMADYNTVRLELESYSDYLKNKIEIICLNKCDVLTDEEIQEKINELQKATNKEVFPISTYTNLGVNKIVKLALKTIKNQE.

The region spanning 1 to 159 is the Obg domain; sequence MNFIDEVKIC…MWIHLSLKLL (159 aa). One can recognise an OBG-type G domain in the interval 160–327; sequence SDVGLVGLPN…IVKLALKTIK (168 aa). Residues 166–173, 191–195, 212–215, 279–282, and 308–310 each bind GTP; these read GLPNAGKS, FTTLV, DIPG, NKCD, and STY. Ser173 and Thr193 together coordinate Mg(2+).

The protein belongs to the TRAFAC class OBG-HflX-like GTPase superfamily. OBG GTPase family. As to quaternary structure, monomer. Mg(2+) is required as a cofactor.

It is found in the cytoplasm. Its function is as follows. An essential GTPase which binds GTP, GDP and possibly (p)ppGpp with moderate affinity, with high nucleotide exchange rates and a fairly low GTP hydrolysis rate. Plays a role in control of the cell cycle, stress response, ribosome biogenesis and in those bacteria that undergo differentiation, in morphogenesis control. This Rickettsia felis (strain ATCC VR-1525 / URRWXCal2) (Rickettsia azadi) protein is GTPase Obg.